A 175-amino-acid polypeptide reads, in one-letter code: Gamma-crystallin B (175 aa).

2 consecutive Beta/gamma crystallin 'Greek key' domains span residues 2 to 40 (GKIT…RVDS) and 41 to 83 (GCWM…RLIP). Residues 84-88 (QHSGT) form a connecting peptide region. Beta/gamma crystallin 'Greek key' domains follow at residues 89 to 129 (FRMR…NVLD) and 130 to 172 (GCWV…RRVM).

Belongs to the beta/gamma-crystallin family. In terms of assembly, monomer.

Crystallins are the dominant structural components of the vertebrate eye lens. The sequence is that of Gamma-crystallin B (CRYGB) from Canis lupus familiaris (Dog).